A 211-amino-acid polypeptide reads, in one-letter code: MKVTAAFASLLLTAFAAPAPEPVLVSRSAGINYVQNYNGNLGDFTYDESTGTFSMYWEDGVSSDFVVGLGWTTGSSKSITYSAQYSASSSSSYLAVYGWVNSPQAEYYIVEDYGDYNPCSSATSLGTVYSDGSTYQVCTDTRRTRPSITGTSTFTQYFSVRESTRTSGTVTIANHFNFWAQHGFGNSNFNYQVMAVEAWNGVGSASVTISS.

An N-terminal signal peptide occupies residues 1-16; sequence MKVTAAFASLLLTAFA. The GH11 domain maps to 19-210; sequence APEPVLVSRS…GVGSASVTIS (192 aa). Glu106 serves as the catalytic Nucleophile. Glu197 functions as the Proton donor in the catalytic mechanism.

This sequence belongs to the glycosyl hydrolase 11 (cellulase G) family.

It is found in the secreted. The enzyme catalyses Endohydrolysis of (1-&gt;4)-beta-D-xylosidic linkages in xylans.. Its pathway is glycan degradation; xylan degradation. Functionally, endo-1,4-beta-xylanase involved in the hydrolysis of xylan, a major structural heterogeneous polysaccharide found in plant biomass representing the second most abundant polysaccharide in the biosphere, after cellulose. In Aspergillus niger, this protein is Endo-1,4-beta-xylanase 5 (XYN5).